Reading from the N-terminus, the 331-residue chain is Phospho-N-acetylmuramoyl-pentapeptide-transferase (331 aa).

9 helical membrane-spanning segments follow: residues 7–27 (IIYT…LTIP), 54–74 (TIGG…SGLI), 78–98 (LWIA…DDFI), 106–126 (LGLR…ILAI), 133–153 (IMGT…AGFT), 154–174 (ITQT…VVVA), 195–215 (IIAA…LAIF), 249–269 (AIAT…VGGI), and 311–331 (VVIV…LALS).

This sequence belongs to the glycosyltransferase 4 family. MraY subfamily. Mg(2+) serves as cofactor.

The protein localises to the cell membrane. It carries out the reaction UDP-N-acetyl-alpha-D-muramoyl-L-alanyl-gamma-D-glutamyl-meso-2,6-diaminopimeloyl-D-alanyl-D-alanine + di-trans,octa-cis-undecaprenyl phosphate = di-trans,octa-cis-undecaprenyl diphospho-N-acetyl-alpha-D-muramoyl-L-alanyl-D-glutamyl-meso-2,6-diaminopimeloyl-D-alanyl-D-alanine + UMP. It functions in the pathway cell wall biogenesis; peptidoglycan biosynthesis. Functionally, catalyzes the initial step of the lipid cycle reactions in the biosynthesis of the cell wall peptidoglycan: transfers peptidoglycan precursor phospho-MurNAc-pentapeptide from UDP-MurNAc-pentapeptide onto the lipid carrier undecaprenyl phosphate, yielding undecaprenyl-pyrophosphoryl-MurNAc-pentapeptide, known as lipid I. The polypeptide is Phospho-N-acetylmuramoyl-pentapeptide-transferase (Alkaliphilus metalliredigens (strain QYMF)).